A 154-amino-acid chain; its full sequence is MHALVQLRGEVNMHTDIQDTLEMLNIHHVNHCTLVPETDAYRGMVAKVNDFVAFGEPSQETLETVLATRAEPLEGDADVDDEWVAEHTDYDDISGLAFALLSEETTLREQGLSPTLRLHPPRGGHDGVKHPVKEGGQLGKHDTEGIDDLLEAMR.

Residues 114-146 (PTLRLHPPRGGHDGVKHPVKEGGQLGKHDTEGI) form a disordered region. Positions 123–144 (GGHDGVKHPVKEGGQLGKHDTE) are enriched in basic and acidic residues.

The protein belongs to the universal ribosomal protein uL30 family. In terms of assembly, part of the 50S ribosomal subunit. Binds 5S rRNA.

Its function is as follows. This is one of 5 proteins that mediate the attachment of the 5S rRNA onto the large ribosomal subunit, stabilizing the orientation of adjacent RNA domains. The protein is Large ribosomal subunit protein uL30 of Haloarcula marismortui (strain ATCC 43049 / DSM 3752 / JCM 8966 / VKM B-1809) (Halobacterium marismortui).